Reading from the N-terminus, the 404-residue chain is Subtilisin-like protease 3 (404 aa).

Positions 1-20 (MLFSKSLVALVACFLPLIVS) are cleaved as a signal peptide. Residues 21-114 (ATELKLRNAA…VDKDVKVSAY (94 aa)) constitute a propeptide that is removed on maturation. The region spanning 38-112 (SYIVVYKDID…AYVDKDVKVS (75 aa)) is the Inhibitor I9 domain. The Peptidase S8 domain maps to 123 to 404 (PWGLDRISHR…DNLAYNDDGY (282 aa)). Asn-133 is a glycosylation site (N-linked (GlcNAc...) asparagine). Active-site charge relay system residues include Asp-158 and His-190. 5 N-linked (GlcNAc...) asparagine glycosylation sites follow: Asn-243, Asn-251, Asn-286, Asn-307, and Asn-340. Catalysis depends on Ser-347, which acts as the Charge relay system. Residue Asn-366 is glycosylated (N-linked (GlcNAc...) asparagine).

Belongs to the peptidase S8 family.

The protein resides in the secreted. Functionally, secreted subtilisin-like serine endopeptidase. Mediates the degradation of collagen, the major structural protein in the mammalian host. Degrades the nonhelical regions of collagen that function in the cross-linking of the helical components. May function as virulence factor involved in epidermal wing necrosis observed in white nose syndrome (WNS) in bats. The sequence is that of Subtilisin-like protease 3 from Pseudogymnoascus destructans (strain ATCC MYA-4855 / 20631-21) (Bat white-nose syndrome fungus).